The sequence spans 614 residues: Type VII secretion system protein EssD (614 aa).

The tract at residues 417-445 is disordered; it reads QNHVTHGPKDSMVRSEGKHSISSHEMNSS. A compositionally biased stretch (basic and acidic residues) spans 423-435; the sequence is GPKDSMVRSEGKH.

This sequence belongs to the EssD family. Interacts (via C-terminal) with EssG; this interaction blocks EssD activity. Interacts with EssE.

The protein resides in the secreted. It is found in the cell membrane. Its function is as follows. Component of the type VII secretion system (Ess). Plays a role in Ess secretion during infection. Required for the efficient secretion of EsxA. Required for abscess formation and staphylococcal persistence in host tissues. Possesses a toxic DNase activity that is modulated by EsaG by forming a nuclease toxin-antitoxin pair. This nuclease toxin targets competitor bacteria. In Staphylococcus aureus (strain USA300), this protein is Type VII secretion system protein EssD.